Reading from the N-terminus, the 283-residue chain is Probable endonuclease 4 (283 aa).

His-69, His-109, Glu-145, Asp-179, His-182, His-216, Asp-229, His-231, and Glu-261 together coordinate Zn(2+).

The protein belongs to the AP endonuclease 2 family. Zn(2+) serves as cofactor.

The catalysed reaction is Endonucleolytic cleavage to 5'-phosphooligonucleotide end-products.. Functionally, endonuclease IV plays a role in DNA repair. It cleaves phosphodiester bonds at apurinic or apyrimidinic (AP) sites, generating a 3'-hydroxyl group and a 5'-terminal sugar phosphate. This is Probable endonuclease 4 from Campylobacter curvus (strain 525.92).